The primary structure comprises 68 residues: P21 prophage-derived head-stabilizing protein (68 aa).

This sequence belongs to the lambda phage gpW family.

The sequence is that of P21 prophage-derived head-stabilizing protein from Escherichia coli O6:H1 (strain CFT073 / ATCC 700928 / UPEC).